Here is a 39-residue protein sequence, read N- to C-terminus: MADFTKFLTTAPVAFILFSSFVFALFIEINRFFPDILTF.

A helical transmembrane segment spans residues 7–27 (FLTTAPVAFILFSSFVFALFI).

The protein belongs to the PsaJ family.

The protein localises to the cellular thylakoid membrane. In terms of biological role, may help in the organization of the PsaE and PsaF subunits. The protein is Photosystem I reaction center subunit IX of Synechococcus sp. (strain JA-2-3B'a(2-13)) (Cyanobacteria bacterium Yellowstone B-Prime).